A 338-amino-acid chain; its full sequence is Solute carrier family 35 member G5 (338 aa).

The segment at 1–21 is disordered; the sequence is MAGSHPYFNLPDSTHPSPPSA. Helical transmembrane passes span 37–57, 67–87, 105–125, 160–180, 190–210, 221–241, 250–270, 281–301, and 305–325; these read TNGL…VGPL, LPSL…ALPL, CFCA…VQVV, CGLL…LWTL, ALGY…LLVY, TVAF…LFVL, LLSW…FTCV, LVCA…YYVL, and VAPF…IITA. In terms of domain architecture, EamA 1 spans 49–174; sequence LPAGFVGPLS…SILGLIIIVG (126 aa). One can recognise an EamA 2 domain in the interval 272–325; it reads YAVTKAHPALVCAVLHSEVVVALILQYYVLHETVAPFDITGAGIVLGSIAIITA.

Belongs to the SLC35G solute transporter family.

Its subcellular location is the membrane. The polypeptide is Solute carrier family 35 member G5 (SLC35G5) (Pan paniscus (Pygmy chimpanzee)).